The chain runs to 89 residues: Small ribosomal subunit protein uS15 (89 aa).

This sequence belongs to the universal ribosomal protein uS15 family. In terms of assembly, part of the 30S ribosomal subunit. Forms a bridge to the 50S subunit in the 70S ribosome, contacting the 23S rRNA.

One of the primary rRNA binding proteins, it binds directly to 16S rRNA where it helps nucleate assembly of the platform of the 30S subunit by binding and bridging several RNA helices of the 16S rRNA. Functionally, forms an intersubunit bridge (bridge B4) with the 23S rRNA of the 50S subunit in the ribosome. The chain is Small ribosomal subunit protein uS15 from Prochlorococcus marinus subsp. pastoris (strain CCMP1986 / NIES-2087 / MED4).